A 446-amino-acid chain; its full sequence is D(1A) dopamine receptor (446 aa).

Topologically, residues 1–23 (MRTLNTSAMDGTGLVVERDFSVR) are extracellular. N5 carries N-linked (GlcNAc...) asparagine glycosylation. The helical transmembrane segment at 24–49 (ILTACFLSLLILSTLLGNTLVCAAVI) threads the bilayer. The Cytoplasmic segment spans residues 50–60 (RFRHLRSKVTN). The chain crosses the membrane as a helical span at residues 61–87 (FFVISLAVSDLLVAVLVMPWKAVAEIA). The Extracellular segment spans residues 88-96 (GFWPFGSFC). A disulfide bond links C96 and C186. A helical membrane pass occupies residues 97–119 (NIWVAFDIMCSTASILNLCVISV). Topologically, residues 120–138 (DRYWAISSPFRYERKMTPK) are cytoplasmic. A helical transmembrane segment spans residues 139–163 (AAFILISVAWTLSVLISFIPVQLSW). Residues 164–192 (HKAKPTSPSDGNATSLAETIDNCDSSLSR) are Extracellular-facing. N175 carries an N-linked (GlcNAc...) asparagine glycan. A helical transmembrane segment spans residues 193–218 (TYAISSSVISFYIPVAIMIVTYTRIY). The Cytoplasmic segment spans residues 219-272 (RIAQKQIRRIAALERAAVHAKNCQTTTGNGKPVECSQPESSFKMSFKRETKVLK). A helical membrane pass occupies residues 273 to 299 (TLSVIMGVFVCCWLPFFILNCILPFCG). The Extracellular segment spans residues 300-312 (SGETQPFCIDSIT). Residues 313 to 337 (FDVFVWFGWANSSLNPIIYAFNADF) form a helical membrane-spanning segment. Over 338–446 (RKAFSTLLGC…PITQNGQHPT (109 aa)) the chain is Cytoplasmic. Residues C347 and C351 are each lipidated (S-palmitoyl cysteine).

The protein belongs to the G-protein coupled receptor 1 family. In terms of assembly, interacts with DNAJC14 via its C-terminus. Interacts with DRD2. Interacts with DORIP1.

It localises to the cell membrane. The protein resides in the endoplasmic reticulum membrane. The protein localises to the cell projection. Its subcellular location is the cilium membrane. It is found in the dendrite. It localises to the dendritic spine. In terms of biological role, dopamine receptor whose activity is mediated by G proteins which activate adenylyl cyclase. This chain is D(1A) dopamine receptor (DRD1), found in Macaca mulatta (Rhesus macaque).